The following is a 425-amino-acid chain: MSINNKQWLGLPLNLLWGYIAIAVFMTGDGFELAFLSHYIKALGFSPAEASFAFTLYGLAAALSAWISGVVAEIITPLKTMMIGFVLWCVFHVLFLVFGLGHANYALILLFYGIRGFAYPLFLYSFIVAIVHNVKSDNASSAIGWFWAVYSIGIGVFGSYIPSFTIPHIGEMGTLWLALAFCLTGGVIALVSLRHIQTPQHMQNLTTREKFSELGRAATLLYTNRNILLSSMVRIINTLSLFGFAVIMPMMFVDELGFSTSEWLQVWAVFFFTTIFSNVLWGILGEKLGWMKVVRWFGCIGMALSSLAFYYIPQHFGHSFAMALIPAIALGIFVAAFVPLAAVFPALEPKHKGAAISVYNLSAGMSNFLAPAIAVVLLPFFSTIGVVIAYTALYVVAFFLCAFIRVEQPGFSHKEATAREQVEFS.

The Cytoplasmic segment spans residues 1-7 (MSINNKQ). Residues 8 to 28 (WLGLPLNLLWGYIAIAVFMTG) traverse the membrane as a helical segment. Topologically, residues 29-51 (DGFELAFLSHYIKALGFSPAEAS) are extracellular. The helical transmembrane segment at 52-72 (FAFTLYGLAAALSAWISGVVA) threads the bilayer. The Cytoplasmic portion of the chain corresponds to 73 to 80 (EIITPLKT). Residues 81–101 (MMIGFVLWCVFHVLFLVFGLG) traverse the membrane as a helical segment. Over 102–107 (HANYAL) the chain is Extracellular. A helical membrane pass occupies residues 108 to 128 (ILLFYGIRGFAYPLFLYSFIV). Over 129–141 (AIVHNVKSDNASS) the chain is Cytoplasmic. The helical transmembrane segment at 142–162 (AIGWFWAVYSIGIGVFGSYIP) threads the bilayer. Residues 163-172 (SFTIPHIGEM) lie on the Extracellular side of the membrane. Residues 173–193 (GTLWLALAFCLTGGVIALVSL) form a helical membrane-spanning segment. Over 194–237 (RHIQTPQHMQNLTTREKFSELGRAATLLYTNRNILLSSMVRIIN) the chain is Cytoplasmic. The chain crosses the membrane as a helical span at residues 238–258 (TLSLFGFAVIMPMMFVDELGF). The Extracellular portion of the chain corresponds to 259 to 263 (STSEW). Residues 264-284 (LQVWAVFFFTTIFSNVLWGIL) traverse the membrane as a helical segment. The Cytoplasmic segment spans residues 285–295 (GEKLGWMKVVR). A helical membrane pass occupies residues 296-316 (WFGCIGMALSSLAFYYIPQHF). At 317 to 323 (GHSFAMA) the chain is on the extracellular side. The chain crosses the membrane as a helical span at residues 324 to 344 (LIPAIALGIFVAAFVPLAAVF). Over 345–360 (PALEPKHKGAAISVYN) the chain is Cytoplasmic. Residues 361–381 (LSAGMSNFLAPAIAVVLLPFF) form a helical membrane-spanning segment. The Extracellular segment spans residues 382 to 383 (ST). A helical transmembrane segment spans residues 384–404 (IGVVIAYTALYVVAFFLCAFI). The Cytoplasmic segment spans residues 405–425 (RVEQPGFSHKEATAREQVEFS).

It belongs to the major facilitator superfamily. Sugar transporter (TC 2.A.1.1) family. CsbX subfamily.

The protein localises to the cell membrane. The polypeptide is D-arabinitol transporter (dalT) (Klebsiella pneumoniae).